The following is a 242-amino-acid chain: MEFDPVKINTSSIDHVTILQYIDEPNDIRLTVCIIRNVNNITYYINITKINPHLANRFRAWKKRIAGRDYMTNLSRDTGIQQSKLTETIRNCQKNKNIYGLYIHYNLVINVVIDWITDVIVQSILRGLVNWYIANNTYTPNTPNNTTTISELDIIKILDKYEDMYRVSKEKECGICYEVVYSKRLENDRYFGLLDSCNHIFCITCINIWHRTRRETGASDNCPICRTRFKKITMSKFYKLVN.

The KilA-N domain maps to 21–131 (YIDEPNDIRL…QSILRGLVNW (111 aa)). An RING-type zinc finger spans residues 173–226 (CGICYEVVYSKRLENDRYFGLLDSCNHIFCITCINIWHRTRRETGASDNCPICR).

Belongs to the orthopoxvirus OPG021 family.

It is found in the host cytoplasm. The catalysed reaction is S-ubiquitinyl-[E2 ubiquitin-conjugating enzyme]-L-cysteine + [acceptor protein]-L-lysine = [E2 ubiquitin-conjugating enzyme]-L-cysteine + N(6)-ubiquitinyl-[acceptor protein]-L-lysine.. Functionally, RING-finger E3 ubiquitin ligase which catalyzes the formation of both 'Lys-48'- and 'Lys-63'-linked polyubiquitin chains. Plays an important role in virulence by acting as an anti-apoptotic factor. This is Host range factor p28 (OPG021) from Monkeypox virus.